Here is a 91-residue protein sequence, read N- to C-terminus: Small ribosomal subunit protein uS15 (91 aa).

The protein belongs to the universal ribosomal protein uS15 family. In terms of assembly, part of the 30S ribosomal subunit. Forms a bridge to the 50S subunit in the 70S ribosome, contacting the 23S rRNA.

In terms of biological role, one of the primary rRNA binding proteins, it binds directly to 16S rRNA where it helps nucleate assembly of the platform of the 30S subunit by binding and bridging several RNA helices of the 16S rRNA. Its function is as follows. Forms an intersubunit bridge (bridge B4) with the 23S rRNA of the 50S subunit in the ribosome. The sequence is that of Small ribosomal subunit protein uS15 from Synechococcus sp. (strain JA-3-3Ab) (Cyanobacteria bacterium Yellowstone A-Prime).